Reading from the N-terminus, the 412-residue chain is Light-independent protochlorophyllide reductase subunit N (412 aa).

[4Fe-4S] cluster-binding residues include cysteine 16, cysteine 41, and cysteine 102.

It belongs to the BchN/ChlN family. In terms of assembly, protochlorophyllide reductase is composed of three subunits; ChlL, ChlN and ChlB. Forms a heterotetramer of two ChlB and two ChlN subunits. [4Fe-4S] cluster is required as a cofactor.

It carries out the reaction chlorophyllide a + oxidized 2[4Fe-4S]-[ferredoxin] + 2 ADP + 2 phosphate = protochlorophyllide a + reduced 2[4Fe-4S]-[ferredoxin] + 2 ATP + 2 H2O. Its pathway is porphyrin-containing compound metabolism; chlorophyll biosynthesis (light-independent). Functionally, component of the dark-operative protochlorophyllide reductase (DPOR) that uses Mg-ATP and reduced ferredoxin to reduce ring D of protochlorophyllide (Pchlide) to form chlorophyllide a (Chlide). This reaction is light-independent. The NB-protein (ChlN-ChlB) is the catalytic component of the complex. The protein is Light-independent protochlorophyllide reductase subunit N of Synechococcus sp. (strain RCC307).